The following is a 293-amino-acid chain: ATP phosphoribosyltransferase (293 aa).

This sequence belongs to the ATP phosphoribosyltransferase family. Long subfamily. Mg(2+) serves as cofactor.

Its subcellular location is the cytoplasm. The catalysed reaction is 1-(5-phospho-beta-D-ribosyl)-ATP + diphosphate = 5-phospho-alpha-D-ribose 1-diphosphate + ATP. It participates in amino-acid biosynthesis; L-histidine biosynthesis; L-histidine from 5-phospho-alpha-D-ribose 1-diphosphate: step 1/9. Feedback inhibited by histidine. Functionally, catalyzes the condensation of ATP and 5-phosphoribose 1-diphosphate to form N'-(5'-phosphoribosyl)-ATP (PR-ATP). Has a crucial role in the pathway because the rate of histidine biosynthesis seems to be controlled primarily by regulation of HisG enzymatic activity. This is ATP phosphoribosyltransferase from Nitratidesulfovibrio vulgaris (strain ATCC 29579 / DSM 644 / CCUG 34227 / NCIMB 8303 / VKM B-1760 / Hildenborough) (Desulfovibrio vulgaris).